We begin with the raw amino-acid sequence, 367 residues long: 2-aminoethylphosphonate--pyruvate transaminase (367 aa).

Residues 65–67 (SGS), Tyr-92, Thr-143, and Asp-168 each bind pyridoxal 5'-phosphate. Lys-194 bears the N6-(pyridoxal phosphate)lysine mark. Position 243 (Thr-243) interacts with pyridoxal 5'-phosphate.

It belongs to the class-V pyridoxal-phosphate-dependent aminotransferase family. PhnW subfamily. In terms of assembly, homodimer. It depends on pyridoxal 5'-phosphate as a cofactor.

It catalyses the reaction (2-aminoethyl)phosphonate + pyruvate = phosphonoacetaldehyde + L-alanine. Functionally, involved in phosphonate degradation. This Salmonella typhimurium (strain LT2 / SGSC1412 / ATCC 700720) protein is 2-aminoethylphosphonate--pyruvate transaminase (phnW).